Here is a 405-residue protein sequence, read N- to C-terminus: MAAEMALVKPITPKFINPMRTFSSSSKFSTIKMSATSQSNTTTTATKPSKKGNKKEINETLLTPRFYTTDFDEMETLFNTEINKKLNQSEFEALLQEFKTDYNQTHFVRNKEFKEAADKMQGPLRQIFVEFLERSCTAEFSGFLLYKELGRRLKKTNPVVAEIFSLMSRDEARHAGFLNKGLSDFNYALDLGFLTKARKYTFFKPKFIFYATYLSEKIGYWRYITIYRHLKENPEYQCYPIFKYFENWCQDENRHGDFFSALMKAQPQFLNDWKAKLWARFFCLSVYVTMYLNDCQRTAFYEGIGLDTKEFDMHVIIETNRTTARIFPAVLDVENPEFKRKLDRMVVINQKLQAVGETEDNSVVKNLKRVPLIAALVSEILAAYLMPPIESGSVDFAEFEPKLVY.

Residues 1–44 (MAAEMALVKPITPKFINPMRTFSSSSKFSTIKMSATSQSNTTTT) constitute a chloroplast transit peptide. Residues 33–47 (MSATSQSNTTTTATK) are compositionally biased toward low complexity. Positions 33-54 (MSATSQSNTTTTATKPSKKGNK) are disordered.

It belongs to the AcsF family. Fe cation serves as cofactor.

Its subcellular location is the plastid. The protein localises to the chloroplast. It carries out the reaction Mg-protoporphyrin IX 13-monomethyl ester + 3 NADPH + 3 O2 + 2 H(+) = 3,8-divinyl protochlorophyllide a + 3 NADP(+) + 5 H2O. Its pathway is porphyrin-containing compound metabolism; chlorophyll biosynthesis. In terms of biological role, catalyzes the formation of the isocyclic ring in chlorophyll biosynthesis. Mediates the cyclase reaction, which results in the formation of divinylprotochlorophyllide (Pchlide) characteristic of all chlorophylls from magnesium-protoporphyrin IX 13-monomethyl ester (MgPMME). The sequence is that of Magnesium-protoporphyrin IX monomethyl ester [oxidative] cyclase, chloroplastic (CRD1) from Euphorbia esula (Leafy spurge).